A 194-amino-acid chain; its full sequence is Potassium-transporting ATPase KdpC subunit (194 aa).

The helical transmembrane segment at 12 to 34 (LFLLLLTGGVYPLLTTALGQWWF) threads the bilayer.

It belongs to the KdpC family. The system is composed of three essential subunits: KdpA, KdpB and KdpC.

It localises to the cell inner membrane. In terms of biological role, part of the high-affinity ATP-driven potassium transport (or Kdp) system, which catalyzes the hydrolysis of ATP coupled with the electrogenic transport of potassium into the cytoplasm. This subunit acts as a catalytic chaperone that increases the ATP-binding affinity of the ATP-hydrolyzing subunit KdpB by the formation of a transient KdpB/KdpC/ATP ternary complex. The chain is Potassium-transporting ATPase KdpC subunit from Salmonella schwarzengrund (strain CVM19633).